Here is a 220-residue protein sequence, read N- to C-terminus: Carbonic anhydrase 2 (220 aa).

Cys42, Asp44, His98, and Cys101 together coordinate Zn(2+).

This sequence belongs to the beta-class carbonic anhydrase family. As to quaternary structure, homodimer. It depends on Zn(2+) as a cofactor.

It catalyses the reaction hydrogencarbonate + H(+) = CO2 + H2O. The protein is Carbonic anhydrase 2 (can) of Escherichia coli (strain K12).